The chain runs to 218 residues: Recombination protein RecR (218 aa).

The C4-type zinc finger occupies 56-71 (CRICCNISRDEVCRIC). A Toprim domain is found at 79–195 (GLICVVEEPK…VVSRLASGMP (117 aa)).

The protein belongs to the RecR family.

In terms of biological role, may play a role in DNA repair. It seems to be involved in an RecBC-independent recombinational process of DNA repair. It may act with RecF and RecO. This is Recombination protein RecR from Corynebacterium efficiens (strain DSM 44549 / YS-314 / AJ 12310 / JCM 11189 / NBRC 100395).